A 334-amino-acid polypeptide reads, in one-letter code: Putative 2-hydroxyacid dehydrogenase UNK4.10 (334 aa).

NAD(+) contacts are provided by residues 166 to 167, 244 to 246, and Asp270; these read GI and TAR. Arg246 is an active-site residue. Residue Glu275 is part of the active site. The Proton donor role is filled by His293. NAD(+) is bound at residue 293 to 296; sequence HLGT.

Belongs to the D-isomer specific 2-hydroxyacid dehydrogenase family.

The protein is Putative 2-hydroxyacid dehydrogenase UNK4.10 of Schizosaccharomyces pombe (strain 972 / ATCC 24843) (Fission yeast).